The chain runs to 313 residues: Apolipoprotein E (313 aa).

The signal sequence occupies residues 1–18; the sequence is MKVLWVALVITLLAGCQA. 8 tandem repeats follow at residues 79 to 100, 101 to 122, 123 to 144, 145 to 166, 167 to 188, 189 to 209, 210 to 229, and 230 to 251. Positions 79–251 are 8 X 22 AA approximate tandem repeats; it reads VLMDETMKEV…HLEEIREQLE (173 aa). An LDL and other lipoprotein receptors binding region spans residues 157–167; the sequence is HLRKLRKRLLR. Residue 161-164 coordinates heparin; that stretch reads LRKR. Residues 209–286 are lipid-binding and lipoprotein association; that stretch reads AGTLASQTLR…SWFEPLVEDM (78 aa). Residue 225–232 participates in heparin binding; it reads HQKLRGRV. The homooligomerization stretch occupies residues 262–313; it reads SQIRLQAEAFQARLKSWFEPLVEDMQRQWAGLVEKVQLAMATSSTSAPSENH. The segment at 274 to 286 is specificity for association with VLDL; the sequence is RLKSWFEPLVEDM.

The protein belongs to the apolipoprotein A1/A4/E family. As to quaternary structure, homotetramer. May interact with ABCA1; functionally associated with ABCA1 in the biogenesis of HDLs. May interact with APP/A4 amyloid-beta peptide; the interaction is extremely stable in vitro but its physiological significance is unclear. May interact with MAPT. May interact with MAP2. In the cerebrospinal fluid, interacts with secreted SORL1. Interacts with PMEL; this allows the loading of PMEL luminal fragment on ILVs to induce fibril nucleation. APOE exists as multiple glycosylated and sialylated glycoforms within cells and in plasma. The extent of glycosylation and sialylation are tissue and context specific. In terms of processing, glycated in plasma VLDL. Post-translationally, phosphorylated by FAM20C in the extracellular medium.

Its subcellular location is the secreted. It is found in the extracellular space. It localises to the extracellular matrix. The protein resides in the extracellular vesicle. The protein localises to the endosome. Its subcellular location is the multivesicular body. Functionally, APOE is an apolipoprotein, a protein associating with lipid particles, that mainly functions in lipoprotein-mediated lipid transport between organs via the plasma and interstitial fluids. APOE is a core component of plasma lipoproteins and is involved in their production, conversion and clearance. Apolipoproteins are amphipathic molecules that interact both with lipids of the lipoprotein particle core and the aqueous environment of the plasma. As such, APOE associates with chylomicrons, chylomicron remnants, very low density lipoproteins (VLDL) and intermediate density lipoproteins (IDL) but shows a preferential binding to high-density lipoproteins (HDL). It also binds a wide range of cellular receptors including the LDL receptor/LDLR and the very low-density lipoprotein receptor/VLDLR that mediate the cellular uptake of the APOE-containing lipoprotein particles. Finally, APOE also has a heparin-binding activity and binds heparan-sulfate proteoglycans on the surface of cells, a property that supports the capture and the receptor-mediated uptake of APOE-containing lipoproteins by cells. The polypeptide is Apolipoprotein E (APOE) (Balaenoptera acutorostrata scammoni (North Pacific minke whale)).